Consider the following 101-residue polypeptide: CYC02 protein (101 aa).

A 1; approximate repeat occupies 42-64; sequence DAVCHHGCCRWFHHRCVRCCRSA. The 2 X approximate repeats stretch occupies residues 42–101; the sequence is DAVCHHGCCRWFHHRCVRCCRSAEEVSVSDTENNAAADAHCRHGCCRWFHGRCIRCCPSA. One copy of the 2; approximate repeat lies at 79–101; the sequence is DAHCRHGCCRWFHGRCIRCCPSA.

Belongs to the GRP family.

Functionally, may be involved in the control of the cell cycle at the G1/S start transition. In Catharanthus roseus (Madagascar periwinkle), this protein is CYC02 protein (CYC02).